A 346-amino-acid polypeptide reads, in one-letter code: MLVLGIESSCDETGLALYDTQRGLLAHALHSQIAMHREYGGVVPELASRDHIRRALPLLEEVMAQSGTHRDDIDAIAFTQGPGLAGALLVGASIANALALAWNKPTVGIHHLEGHLLSPLLVDEPPPFPFIALLVSGGHTQLMRVTDVGVYETLGETLDDAAGEAFDKTAKLIGLGYPGGPEVSKLAETGTPGAVVLPRPMLHSGDLDFSFSGLKTAVLTQMKKFEAAKLESEALERAKADLARGFVDAAVDVLVAKSLAALKQTKLKRLVVAGGVGANRQLRAALSAAAAKRGFDVHYPDLALCTDNGAMIALAGALRLGRWPEQANADYAFTVKPRWDLASLAR.

Positions 111 and 115 each coordinate Fe cation. Substrate is bound by residues 134–138, Asp167, Gly180, and Asn279; that span reads LVSGG. Fe cation is bound at residue Asp307.

The protein belongs to the KAE1 / TsaD family. Requires Fe(2+) as cofactor.

It localises to the cytoplasm. It carries out the reaction L-threonylcarbamoyladenylate + adenosine(37) in tRNA = N(6)-L-threonylcarbamoyladenosine(37) in tRNA + AMP + H(+). Its function is as follows. Required for the formation of a threonylcarbamoyl group on adenosine at position 37 (t(6)A37) in tRNAs that read codons beginning with adenine. Is involved in the transfer of the threonylcarbamoyl moiety of threonylcarbamoyl-AMP (TC-AMP) to the N6 group of A37, together with TsaE and TsaB. TsaD likely plays a direct catalytic role in this reaction. The sequence is that of tRNA N6-adenosine threonylcarbamoyltransferase from Burkholderia ambifaria (strain MC40-6).